The chain runs to 240 residues: Ribosomal RNA small subunit methyltransferase G (240 aa).

Residues glycine 80, phenylalanine 85, 103 to 105 (DSS), 131 to 132 (AE), and arginine 150 each bind S-adenosyl-L-methionine.

The protein belongs to the methyltransferase superfamily. RNA methyltransferase RsmG family.

It localises to the cytoplasm. Specifically methylates the N7 position of a guanine in 16S rRNA. The chain is Ribosomal RNA small subunit methyltransferase G from Thermoanaerobacter sp. (strain X514).